Reading from the N-terminus, the 366-residue chain is Putative [LysW]-aminoadipate semialdehyde/glutamate semialdehyde transaminase (366 aa).

Pyridoxal 5'-phosphate is bound by residues 90 to 91 (GT) and F117. Substrate is bound at residue R120. Residue 202-205 (DEVQ) coordinates pyridoxal 5'-phosphate. K230 carries the post-translational modification N6-(pyridoxal phosphate)lysine. S254 contacts substrate. T255 is a binding site for pyridoxal 5'-phosphate.

Belongs to the class-III pyridoxal-phosphate-dependent aminotransferase family. LysJ subfamily. In terms of assembly, homodimer. It depends on pyridoxal 5'-phosphate as a cofactor.

It is found in the cytoplasm. It catalyses the reaction [amino-group carrier protein]-C-terminal-gamma-(L-lysyl)-L-glutamate + 2-oxoglutarate = [amino-group carrier protein]-C-terminal-N-(1-carboxy-5-oxopentan-1-yl)-L-glutamine + L-glutamate. The catalysed reaction is [amino-group carrier protein]-C-terminal-gamma-(L-ornithyl)-L-glutamate + 2-oxoglutarate = [amino-group carrier protein]-C-terminal-gamma-(L-glutamyl-5-semialdehyde)-L-glutamate + L-glutamate. Its pathway is amino-acid biosynthesis; L-lysine biosynthesis via AAA pathway; L-lysine from L-alpha-aminoadipate (Thermus route): step 4/5. It participates in amino-acid biosynthesis; L-arginine biosynthesis. Its function is as follows. Involved in both the arginine and lysine biosynthetic pathways. The sequence is that of Putative [LysW]-aminoadipate semialdehyde/glutamate semialdehyde transaminase from Pyrococcus furiosus (strain ATCC 43587 / DSM 3638 / JCM 8422 / Vc1).